The chain runs to 364 residues: Glutamate 5-kinase (364 aa).

Lys-7 serves as a coordination point for ATP. Positions 47, 134, and 146 each coordinate substrate. ATP is bound by residues Thr-166–Asp-167 and Thr-209–Lys-215. One can recognise a PUA domain in the interval Gln-274–Val-349.

This sequence belongs to the glutamate 5-kinase family.

Its subcellular location is the cytoplasm. The enzyme catalyses L-glutamate + ATP = L-glutamyl 5-phosphate + ADP. Its pathway is amino-acid biosynthesis; L-proline biosynthesis; L-glutamate 5-semialdehyde from L-glutamate: step 1/2. Functionally, catalyzes the transfer of a phosphate group to glutamate to form L-glutamate 5-phosphate. In Prochlorococcus marinus (strain SARG / CCMP1375 / SS120), this protein is Glutamate 5-kinase.